The sequence spans 82 residues: Putative membrane protein insertion efficiency factor (82 aa).

Belongs to the UPF0161 family.

The protein resides in the cell inner membrane. Could be involved in insertion of integral membrane proteins into the membrane. This Rickettsia peacockii (strain Rustic) protein is Putative membrane protein insertion efficiency factor.